We begin with the raw amino-acid sequence, 97 residues long: Aspartyl/glutamyl-tRNA(Asn/Gln) amidotransferase subunit C (97 aa).

Belongs to the GatC family. In terms of assembly, heterotrimer of A, B and C subunits.

It carries out the reaction L-glutamyl-tRNA(Gln) + L-glutamine + ATP + H2O = L-glutaminyl-tRNA(Gln) + L-glutamate + ADP + phosphate + H(+). It catalyses the reaction L-aspartyl-tRNA(Asn) + L-glutamine + ATP + H2O = L-asparaginyl-tRNA(Asn) + L-glutamate + ADP + phosphate + 2 H(+). In terms of biological role, allows the formation of correctly charged Asn-tRNA(Asn) or Gln-tRNA(Gln) through the transamidation of misacylated Asp-tRNA(Asn) or Glu-tRNA(Gln) in organisms which lack either or both of asparaginyl-tRNA or glutaminyl-tRNA synthetases. The reaction takes place in the presence of glutamine and ATP through an activated phospho-Asp-tRNA(Asn) or phospho-Glu-tRNA(Gln). This is Aspartyl/glutamyl-tRNA(Asn/Gln) amidotransferase subunit C from Clostridium botulinum (strain Eklund 17B / Type B).